A 134-amino-acid chain; its full sequence is Large-conductance mechanosensitive channel (134 aa).

The next 2 helical transmembrane spans lie at 16–36 and 81–101; these read VIDL…VTAL and GDFI…FIIV.

This sequence belongs to the MscL family. As to quaternary structure, homopentamer.

The protein resides in the cell inner membrane. Its function is as follows. Channel that opens in response to stretch forces in the membrane lipid bilayer. May participate in the regulation of osmotic pressure changes within the cell. The sequence is that of Large-conductance mechanosensitive channel from Xylella fastidiosa (strain Temecula1 / ATCC 700964).